We begin with the raw amino-acid sequence, 261 residues long: Non-structural protein 2a (261 aa).

It belongs to the coronaviruses ns2a protein family.

Its subcellular location is the host cytoplasm. Not essential for virus replication in transformed murine cells. The polypeptide is Non-structural protein 2a (Mus musculus (Mouse)).